A 349-amino-acid chain; its full sequence is Cyclic AMP-dependent transcription factor ATF-4 (349 aa).

Disordered stretches follow at residues phenylalanine 49–glutamate 75, proline 204–valine 271, and lysine 279–arginine 298. Proline 60 carries the 4-hydroxyproline modification. At threonine 212 the chain carries Phosphothreonine. 5 positions are modified to phosphoserine: serine 214, serine 218, serine 223, serine 230, and serine 234. Residues serine 214–serine 223 carry the BetaTrCP degron motif motif. Over residues glycine 229–arginine 239 the composition is skewed to polar residues. The residue at position 235 (proline 235) is a 4-hydroxyproline. Serine 247 is modified (phosphoserine). The residue at position 251 (serine 251) is a Phosphoserine; by RPS6KA3. Glycyl lysine isopeptide (Lys-Gly) (interchain with G-Cter in SUMO2) cross-links involve residues lysine 258 and lysine 270. The 64-residue stretch at leucine 276–valine 339 folds into the bZIP domain. The segment at lysine 278 to arginine 298 is basic motif. The interaction with GABBR1 stretch occupies residues alanine 303–valine 339. Residues leucine 304–leucine 332 are leucine-zipper. Lysine 309 bears the N6-acetyllysine mark.

Belongs to the bZIP family. In terms of assembly, binds DNA as a homodimer and as a heterodimer. Heterodimer; heterodimerizes with CEBPB. Heterodimer; heterodimerizes with DDIT3/CHOP. Interacts with CEP290 (via an N-terminal region). Interacts with NEK6, DAPK2 (isoform 2) and ZIPK/DAPK3. Interacts (via its leucine zipper domain) with GABBR1 and GABBR2 (via their C-termini). Forms a heterodimer with TXLNG in osteoblasts. Interacts (via its DNA binding domain) with FOXO1 (C-terminal half); the interaction occurs in osteoblasts and regulates glucose homeostasis through suppression of beta-cell proliferation and a decrease in insulin production. Interacts with SATB2; the interaction results in enhanced DNA binding and transactivation by these transcription factors. Interacts with ABRAXAS2. Interacts with TRIB3, inhibiting the transactivation activity of ATF4. Interacts with DISC1; which inhibits ATF4 transcription factor activity by disrupting ATF4 dimerization and DNA-binding. Interacts with EP300/p300; EP300/p300 stabilizes ATF4 and increases its transcriptional activity independently of its catalytic activity by preventing its ubiquitination. In terms of processing, ubiquitinated by SCF(BTRC) in response to mTORC1 signal, followed by proteasomal degradation and leading to down-regulate expression of SIRT4. Interaction with EP300/p300 inhibits ubiquitination by SCF(BTRC). Post-translationally, phosphorylation at Ser-251 by RPS6KA3/RSK2 in osteoblasts enhances transactivation activity and promotes osteoblast differentiation. Phosphorylated on the betaTrCP degron motif at Ser-218, followed by phosphorylation at Thr-212, Ser-223, Ser-230, Ser-234 and Ser-247, promoting interaction with BTRC and ubiquitination. Phosphorylation is promoted by mTORC1. Phosphorylation at Ser-214 by CK2 decreases its stability. Phosphorylated by NEK6. Hydroxylated by PHD3, leading to decreased protein stability. In terms of tissue distribution, ubiquitously expressed in adults.

It is found in the nucleus. It localises to the nucleus speckle. The protein localises to the cytoplasm. The protein resides in the cell membrane. Its subcellular location is the cytoskeleton. It is found in the microtubule organizing center. It localises to the centrosome. Transcription factor that binds the cAMP response element (CRE) (consensus: 5'-GTGACGT[AC][AG]-3') and displays two biological functions, as regulator of metabolic and redox processes under normal cellular conditions, and as master transcription factor during integrated stress response (ISR). Binds to asymmetric CRE's as a heterodimer and to palindromic CRE's as a homodimer. Core effector of the ISR, which is required for adaptation to various stress such as endoplasmic reticulum (ER) stress, amino acid starvation, mitochondrial stress or oxidative stress. During ISR, ATF4 translation is induced via an alternative ribosome translation re-initiation mechanism in response to EIF2S1/eIF-2-alpha phosphorylation, and stress-induced ATF4 acts as a master transcription factor of stress-responsive genes in order to promote cell recovery. Promotes the transcription of genes linked to amino acid sufficiency and resistance to oxidative stress to protect cells against metabolic consequences of ER oxidation. Activates the transcription of NLRP1, possibly in concert with other factors in response to ER stress. Activates the transcription of asparagine synthetase (ASNS) in response to amino acid deprivation or ER stress. However, when associated with DDIT3/CHOP, the transcriptional activation of the ASNS gene is inhibited in response to amino acid deprivation. Together with DDIT3/CHOP, mediates programmed cell death by promoting the expression of genes involved in cellular amino acid metabolic processes, mRNA translation and the terminal unfolded protein response (terminal UPR), a cellular response that elicits programmed cell death when ER stress is prolonged and unresolved. Activates the expression of COX7A2L/SCAF1 downstream of the EIF2AK3/PERK-mediated unfolded protein response, thereby promoting formation of respiratory chain supercomplexes and increasing mitochondrial oxidative phosphorylation. Together with DDIT3/CHOP, activates the transcription of the IRS-regulator TRIB3 and promotes ER stress-induced neuronal cell death by regulating the expression of BBC3/PUMA in response to ER stress. May cooperate with the UPR transcriptional regulator QRICH1 to regulate ER protein homeostasis which is critical for cell viability in response to ER stress. In the absence of stress, ATF4 translation is at low levels and it is required for normal metabolic processes such as embryonic lens formation, fetal liver hematopoiesis, bone development and synaptic plasticity. Acts as a regulator of osteoblast differentiation in response to phosphorylation by RPS6KA3/RSK2: phosphorylation in osteoblasts enhances transactivation activity and promotes expression of osteoblast-specific genes and post-transcriptionally regulates the synthesis of Type I collagen, the main constituent of the bone matrix. Cooperates with FOXO1 in osteoblasts to regulate glucose homeostasis through suppression of beta-cell production and decrease in insulin production. Activates transcription of SIRT4. Regulates the circadian expression of the core clock component PER2 and the serotonin transporter SLC6A4. Binds in a circadian time-dependent manner to the cAMP response elements (CRE) in the SLC6A4 and PER2 promoters and periodically activates the transcription of these genes. Mainly acts as a transcriptional activator in cellular stress adaptation, but it can also act as a transcriptional repressor: acts as a regulator of synaptic plasticity by repressing transcription, thereby inhibiting induction and maintenance of long-term memory. Regulates synaptic functions via interaction with DISC1 in neurons, which inhibits ATF4 transcription factor activity by disrupting ATF4 dimerization and DNA-binding. The polypeptide is Cyclic AMP-dependent transcription factor ATF-4 (Mus musculus (Mouse)).